A 173-amino-acid polypeptide reads, in one-letter code: Large ribosomal subunit protein uL29c (173 aa).

The N-terminal 60 residues, 1–60 (MLSLSIATPGTAAIFRRGTASATSTSSSFHGVRIQHQVSARVPAAATISSSSPKPSVVMM), are a transit peptide targeting the chloroplast. Residues 143–173 (KKSIVPRPPPSLKKLQEEEAAEEAAEAAKSA) are disordered. Phosphoserine is present on S172.

The protein belongs to the universal ribosomal protein uL29 family. In terms of assembly, part of the 50S ribosomal subunit.

It is found in the plastid. Its subcellular location is the chloroplast. This is Large ribosomal subunit protein uL29c (RPL29) from Arabidopsis thaliana (Mouse-ear cress).